A 20-amino-acid chain; its full sequence is Brevinin-1DYc (20 aa).

Cysteines 14 and 20 form a disulfide.

As to expression, expressed by the skin glands.

Its subcellular location is the secreted. Its function is as follows. Antimicrobial peptide. Has low activity against the Gram-positive bacterium S.aureus and the Gram-negative bacterium E.coli (MIC&lt;15 uM). Has a strong hemolytic activity. The polypeptide is Brevinin-1DYc (Rana dybowskii (Dybovsky's frog)).